The sequence spans 2737 residues: Non-reducing polyketide synthase ATEG_07661 (2737 aa).

The tract at residues 75–245 is N-terminal acylcarrier protein transacylase domain (SAT); sequence SRSLAELDSW…VRYDQTRATV (171 aa). C154 acts as the Nucleophile; for transacylase activity in catalysis. Catalysis depends on H276, which acts as the Proton donor/acceptor; for transacylase activity. The region spanning 427–854 is the Ketosynthase family 3 (KS3) domain; the sequence is NEAIAIVGMS…GSNASMIITE (428 aa). Catalysis depends on for beta-ketoacyl synthase activity residues C603, H738, and H777. A malonyl-CoA:ACP transacylase (MAT) region spans residues 969 to 1260; that stretch reads FGGQVSRFVG…IMASRAIAQS (292 aa). Residues 1368-1503 are N-terminal hotdog fold; sequence LQSLWNFVEF…ASVEMRAPTD (136 aa). A PKS/mFAS DH domain is found at 1368–1683; sequence LQSLWNFVEF…YGRVAKASMS (316 aa). Positions 1399–1681 are product template (PT) domain; sequence FVLSHVIAQT…VQYGRVAKAS (283 aa). H1403 functions as the Proton acceptor; for dehydratase activity in the catalytic mechanism. The segment at 1535–1683 is C-terminal hotdog fold; that stretch reads VEVLQGRNVY…YGRVAKASMS (149 aa). The Proton donor; for dehydratase activity role is filled by D1592. The interval 1724–1747 is disordered; the sequence is SRTTKKKAKASKSKSSVKKDKAPS. Residues 1725-1739 show a composition bias toward basic residues; the sequence is RTTKKKAKASKSKSS. In terms of domain architecture, Carrier spans 1750–1824; the sequence is RDITDEVRNL…KFVACVSNAL (75 aa). Position 1784 is an O-(pantetheine 4'-phosphoryl)serine (S1784). The tract at residues 1827-1876 is disordered; sequence PNQGQSSIDEDDEDDEHSEDSSNESSSAASDEDASSGLESPDTGILTPED. The segment covering 1834 to 1848 has biased composition (acidic residues); it reads IDEDDEDDEHSEDSS. The span at 1849-1866 shows a compositional bias: low complexity; it reads NESSSAASDEDASSGLES. Positions 2094–2270 are methyltransferase domain; the sequence is ADRIQSSSGS…GFGHVDWTDG (177 aa). An NADPH-binding domain region spans residues 2362–2665; that stretch reads VVLVTGATGS…IPFKDWISRV (304 aa).

Its pathway is secondary metabolite biosynthesis. In terms of biological role, non-reducing polyketide synthase; part of the cluster B that mediates the biosynthesis of azasperpyranones, members of the azaphilone family that exhibit anti-cancer activities. Azasperpyranones are synthesized by 2 clusters, A and B. Cluster A is responsible for the production of the polyhydric phenol moiety while the azaphilonoid scaffold is produced by the cluster B. The non-reducing polyketide synthase ATEG_03629 produces 5-methyl orsellinic acid, which is then reduced to 5-methyl orsellinic aldehyde by the NRPS-like protein ATEG_03630. 5-methyl orsellinic aldehyde is then first hydroxylated by the FAD-dependent monooxygenase ATEG_03635 and subsequently hydroxylated by the cytochrome P450 monooxygenase ATEG_03631 to produce the unstable polyhydric phenol precursor of azasperpyranones. On the other hand, the polyketide synthase ATEG_07659 is responsible for producing the 3,5-dimethyloctadienone moiety from acetyl-CoA, three malonyl-CoA, and two S-adenosyl methionines (SAM). The 3,5-dimethyloctadienone moiety is then loaded onto the SAT domain of ATEG_07661 and extended with four malonyl-CoA and one SAM, which leads to the formation of 2,4-dihydroxy-6-(5,7-dimethyl-2-oxo-trans-3-trans-5-nonadienyl)-3-methylbenzaldehyde (compound 8) after reductive release and aldol condensation. The FAD-dependent monooxygenase ATEG_07662 is the next enzyme in the biosynthesis sequence and hydroxylates the side chain at the benzylic position of compound 8. In Aspergillus nidulans, afoF, the ortholog of the FAD-dependent oxygenase ATEG_07660, is the key enzyme for the biosynthesis of asperfuranone by catalyzing the hydroxylation at C-8 of to prevent the formation of a six-membered ring hemiacetal intermediate and thus facilitating the formation of a five-membered ring to produce asperfuranone. In Aspergillus terreus, ATEG_07660 is probably not functional, which leads to the formation of the six-membered ring hemiacetal intermediate presperpyranone instead of asperfuranone. Finally, ATEG_03636 is involved in the condensation of the polyhydric phenol moiety produced by cluster A and the perasperpyranone precursor produced by cluster B, to yield azasperpyranone A. Further modifications of azasperpyranone A result in the production of derivatives, including azasperpyranone B to F. The protein is Non-reducing polyketide synthase ATEG_07661 of Aspergillus terreus (strain NIH 2624 / FGSC A1156).